We begin with the raw amino-acid sequence, 692 residues long: Elongation factor G (692 aa).

Residues 8 to 282 (EKTRNIGIMA…GVVDYLPSPV (275 aa)) form the tr-type G domain. GTP is bound by residues 17 to 24 (AHIDAGKT), 81 to 85 (DTPGH), and 135 to 138 (NKMD).

Belongs to the TRAFAC class translation factor GTPase superfamily. Classic translation factor GTPase family. EF-G/EF-2 subfamily.

The protein resides in the cytoplasm. Its function is as follows. Catalyzes the GTP-dependent ribosomal translocation step during translation elongation. During this step, the ribosome changes from the pre-translocational (PRE) to the post-translocational (POST) state as the newly formed A-site-bound peptidyl-tRNA and P-site-bound deacylated tRNA move to the P and E sites, respectively. Catalyzes the coordinated movement of the two tRNA molecules, the mRNA and conformational changes in the ribosome. The chain is Elongation factor G from Geobacillus kaustophilus (strain HTA426).